The chain runs to 298 residues: Probable 3-hydroxyacyl-CoA dehydrogenase F54C8.1 (298 aa).

It belongs to the 3-hydroxyacyl-CoA dehydrogenase family. As to quaternary structure, homodimer.

Its subcellular location is the mitochondrion matrix. It catalyses the reaction a (3S)-3-hydroxyacyl-CoA + NAD(+) = a 3-oxoacyl-CoA + NADH + H(+). Its pathway is lipid metabolism; fatty acid beta-oxidation. The sequence is that of Probable 3-hydroxyacyl-CoA dehydrogenase F54C8.1 from Caenorhabditis elegans.